Consider the following 115-residue polypeptide: Aspartate 1-decarboxylase (115 aa).

Ser-25 functions as the Schiff-base intermediate with substrate; via pyruvic acid in the catalytic mechanism. Ser-25 carries the pyruvic acid (Ser) modification. Thr-57 is a binding site for substrate. Tyr-58 (proton donor) is an active-site residue. 72–74 (GAA) is a substrate binding site.

The protein belongs to the PanD family. Heterooctamer of four alpha and four beta subunits. Pyruvate serves as cofactor. Is synthesized initially as an inactive proenzyme, which is activated by self-cleavage at a specific serine bond to produce a beta-subunit with a hydroxyl group at its C-terminus and an alpha-subunit with a pyruvoyl group at its N-terminus.

It is found in the cytoplasm. It catalyses the reaction L-aspartate + H(+) = beta-alanine + CO2. Its pathway is cofactor biosynthesis; (R)-pantothenate biosynthesis; beta-alanine from L-aspartate: step 1/1. Functionally, catalyzes the pyruvoyl-dependent decarboxylation of aspartate to produce beta-alanine. The protein is Aspartate 1-decarboxylase of Campylobacter fetus subsp. fetus (strain 82-40).